A 301-amino-acid polypeptide reads, in one-letter code: Pseudouridine-5'-phosphate glycosidase (301 aa).

The active-site Proton donor is E23. Residues K84 and V104 each contribute to the substrate site. D136 provides a ligand contact to Mn(2+). Position 138 to 140 (S138 to D140) interacts with substrate. K157 serves as the catalytic Nucleophile.

It belongs to the pseudouridine-5'-phosphate glycosidase family. As to quaternary structure, homotrimer. It depends on Mn(2+) as a cofactor.

It catalyses the reaction D-ribose 5-phosphate + uracil = psi-UMP + H2O. Functionally, catalyzes the reversible cleavage of pseudouridine 5'-phosphate (PsiMP) to ribose 5-phosphate and uracil. Functions biologically in the cleavage direction, as part of a pseudouridine degradation pathway. The sequence is that of Pseudouridine-5'-phosphate glycosidase from Mycoplasmopsis agalactiae (strain NCTC 10123 / CIP 59.7 / PG2) (Mycoplasma agalactiae).